The sequence spans 182 residues: Lipid A acyltransferase PagP (182 aa).

An N-terminal signal peptide occupies residues methionine 1–alanine 21. Cysteine 22 carries the N-palmitoyl cysteine lipid modification. A lipid anchor (S-diacylglycerol cysteine) is attached at cysteine 22. Catalysis depends on residues histidine 55, aspartate 98, and serine 99.

It belongs to the lipid A palmitoyltransferase family. As to quaternary structure, homodimer.

The protein localises to the cell outer membrane. It carries out the reaction a lipid A + a 1,2-diacyl-sn-glycero-3-phosphocholine = a hepta-acyl lipid A + a 2-acyl-sn-glycero-3-phosphocholine. The enzyme catalyses a lipid IVA + a 1,2-diacyl-sn-glycero-3-phosphocholine = a lipid IVB + a 2-acyl-sn-glycero-3-phosphocholine. The catalysed reaction is a lipid IIA + a 1,2-diacyl-sn-glycero-3-phosphocholine = a lipid IIB + a 2-acyl-sn-glycero-3-phosphocholine. Its function is as follows. Transfers a fatty acid residue from the sn-1 position of a phospholipid to the N-linked hydroxyfatty acid chain on the proximal unit of lipid A or its precursors. The protein is Lipid A acyltransferase PagP of Bordetella parapertussis (strain 12822 / ATCC BAA-587 / NCTC 13253).